We begin with the raw amino-acid sequence, 483 residues long: MGSQPTNSHFTLNEQTLCGTNISLLGNNRFIQIGNGLHMTYAPGFFGNWSRDLTIGPRFGGLNKQPIHVPPKRTETASIQVTPRSIVINRMNNIQINPTSIGNPQVTIRLPLNNFKSTTQLIQQVSLTDFFRPDIEHAGSIVLILRHPSDMIGEANTLTQAGRDPDVLLEGLRNLFNACTAPWTVGEGGGLRAYVTSLSFIAACRAEEYTDKQAADANRTAIVSAYGCSRMETRLIRFSECLRAMVQCHVFPHRFISFFGSLLEYTIQDNLCNITAVAKGPQEAARTDKTSTRRVTANIPACVFWDVDKDLHLSADGLKHVFLVFVYTQRRQREGVRLHLALSQLNEQCFGRGIGFLLGRIRAENAAWGTEGVANTHQPYNTRALPLVQLSNDPTSPRCSIGEITGVNWNLARQRLYQWTGDFRGLPTQLSCMYAAYTLIGTIPSESVRYTRRMERFGGYNVPTIWLEGVVWGGTNTWNECYY.

Positions L24–T40 match the RIP homotypic interaction motif (RHIM) motif.

It belongs to the herpesviridae TRX1 protein family. As to quaternary structure, interacts with TRX2, MCP and capsid vertex component 2/CVC2. Self-assembles into homo-oligomeric amyloid fibrils. Interacts with host ZBP1; this interaction prevents host necroptosis and extrinsic apoptosis. Interacts with host RIPK3.

It localises to the virion. The protein localises to the host nucleus. Functionally, structural component of the T=16 icosahedral capsid. The capsid is composed of pentamers and hexamers of major capsid protein/MCP, which are linked together by heterotrimers called triplexes. These triplexes are formed by a single molecule of triplex protein 1/TRX1 and two copies of triplex protein 2/TRX2. Additionally, TRX1 is required for efficient transport of TRX2 to the nucleus, which is the site of capsid assembly. Also prevents necroptosis and extrinsic apoptosis by sequestering host ZBP1 into large, insoluble supercomplexes and impairing its ability to interact with RIPK3. In Varicella-zoster virus (strain Dumas) (HHV-3), this protein is Triplex capsid protein 1.